A 251-amino-acid chain; its full sequence is HTH-type transcriptional regulator IolR (251 aa).

The 57-residue stretch at 1–57 (MKLMRIQEMEEYILSHGTVSLDELCQVFNVSKNTVRRDINKLTEKGAIEKVYGGVTS) folds into the HTH deoR-type domain. Residues 19–38 (VSLDELCQVFNVSKNTVRRD) constitute a DNA-binding region (H-T-H motif).

Functionally, iol operon repressor. The polypeptide is HTH-type transcriptional regulator IolR (iolR) (Bacillus subtilis (strain 168)).